We begin with the raw amino-acid sequence, 496 residues long: MDISISWVVIIVFVLSYLILMDKWRASKLPGNLPPSPPKLPVIGHLHLLRGGLPQHVLRGITQKYGAVAHLQLGEVHSVVLSSAESTKQAMKVLDPTFADRFDSIGSQIMWYNNDDMIFSRYNDHWRQIRKICVSELLSPRNVRSFGFIRQDEMARLIRVFESSEGAAINASEEISKMSCAIVCRAAFGSVLKDQGKLADLVKEALSMASGFELADLYPSSWLLNLLCVNKYRLQRMRGRLDNILDGFLEEHKVKKSGEFGGEDIVDVLYRMQKDTEMKAPITNNGIKGFIFDVFSAGTETSATTIQWALSELMKNPEKMVKAQAEVREKLKGKTNPDVADVQELKYLHSVVKETLRLHPPFPLIPRLCKEECEVTGYTIPAKTRTLVNVWSIGRDPAYWKDPDTFNPDRFDEVSRDVIGNDFELIPFGAGRRVCPGLHFGLANVEVPLAQLLYHFDYKLPSAMTAADMDMSETPGLSGPRKNPLIMIPTIHNPTS.

A helical; Signal-anchor for type II membrane protein transmembrane segment spans residues 1-21 (MDISISWVVIIVFVLSYLILM). C435 serves as a coordination point for heme. Residues 471 to 496 (MSETPGLSGPRKNPLIMIPTIHNPTS) are disordered.

Belongs to the cytochrome P450 family. Requires heme as cofactor. Mostly expressed in flowers and stems, and, to a lower extent, in leaves.

It localises to the membrane. The enzyme catalyses gamma-terpinene + 2 reduced [NADPH--hemoprotein reductase] + 2 O2 = carvacrol + 2 oxidized [NADPH--hemoprotein reductase] + 3 H2O + 2 H(+). It carries out the reaction (4S)-limonene + reduced [NADPH--hemoprotein reductase] + O2 = (1S,5R)-carveol + oxidized [NADPH--hemoprotein reductase] + H2O + H(+). It catalyses the reaction (4R)-limonene + reduced [NADPH--hemoprotein reductase] + O2 = (1R,5S)-carveol + oxidized [NADPH--hemoprotein reductase] + H2O + H(+). It functions in the pathway secondary metabolite biosynthesis; terpenoid biosynthesis. Functionally, involved in the biosynthesis of phenolic monoterpenes natural products thymol and carvacrol which have a broad range of biological activities acting as antimicrobial compounds, insecticides, antioxidants and pharmaceutical agents. Catalyzes the C2-hydroxylation of gamma-terpinene to produce carvacrol. Also mediates the C6-hydroxylation of (4S)-limonene and (4R)-limonene to form carveol. The protein is Cytochrome P450 71D180 of Origanum vulgare (Wild marjoram).